The primary structure comprises 200 residues: Protein GrpE (200 aa).

This sequence belongs to the GrpE family. In terms of assembly, homodimer.

It localises to the cytoplasm. Functionally, participates actively in the response to hyperosmotic and heat shock by preventing the aggregation of stress-denatured proteins, in association with DnaK and GrpE. It is the nucleotide exchange factor for DnaK and may function as a thermosensor. Unfolded proteins bind initially to DnaJ; upon interaction with the DnaJ-bound protein, DnaK hydrolyzes its bound ATP, resulting in the formation of a stable complex. GrpE releases ADP from DnaK; ATP binding to DnaK triggers the release of the substrate protein, thus completing the reaction cycle. Several rounds of ATP-dependent interactions between DnaJ, DnaK and GrpE are required for fully efficient folding. This chain is Protein GrpE, found in Mycoplasma mycoides subsp. mycoides SC (strain CCUG 32753 / NCTC 10114 / PG1).